Reading from the N-terminus, the 372-residue chain is 2-aminoethylphosphonate--pyruvate transaminase 2 (372 aa).

Lys-192 bears the N6-(pyridoxal phosphate)lysine mark.

The protein belongs to the class-V pyridoxal-phosphate-dependent aminotransferase family. PhnW subfamily. As to quaternary structure, homodimer. The cofactor is pyridoxal 5'-phosphate.

It carries out the reaction (2-aminoethyl)phosphonate + pyruvate = phosphonoacetaldehyde + L-alanine. Its function is as follows. Involved in phosphonate degradation. In Polaromonas sp. (strain JS666 / ATCC BAA-500), this protein is 2-aminoethylphosphonate--pyruvate transaminase 2.